Here is a 251-residue protein sequence, read N- to C-terminus: Flap endonuclease Xni (251 aa).

Mg(2+) is bound at residue D104. Positions 160 to 249 constitute a 5'-3' exonuclease domain; it reads VQPQQLPDYW…IDGNLQQLRL (90 aa). 5 residues coordinate K(+): L171, A172, P180, V182, and I185. Residues 184 to 189 form an interaction with DNA region; the sequence is GIGPKS.

This sequence belongs to the Xni family. Requires Mg(2+) as cofactor. It depends on K(+) as a cofactor.

Its function is as follows. Has flap endonuclease activity. During DNA replication, flap endonucleases cleave the 5'-overhanging flap structure that is generated by displacement synthesis when DNA polymerase encounters the 5'-end of a downstream Okazaki fragment. The polypeptide is Flap endonuclease Xni (Escherichia coli O81 (strain ED1a)).